A 55-amino-acid polypeptide reads, in one-letter code: Large ribosomal subunit protein bL33 (55 aa).

A compositionally biased stretch (basic and acidic residues) spans 1–11; it reads MAKSGRDKIKL. Positions 1-27 are disordered; the sequence is MAKSGRDKIKLESTAGTGHFYTTTKNK. A compositionally biased stretch (polar residues) spans 14–24; the sequence is TAGTGHFYTTT.

This sequence belongs to the bacterial ribosomal protein bL33 family.

This is Large ribosomal subunit protein bL33 from Herminiimonas arsenicoxydans.